The sequence spans 337 residues: Structural protein VP9 (337 aa).

The protein localises to the virion. The protein resides in the host cytoplasm. This chain is Structural protein VP9, found in Colorado tick fever virus (strain USA/Florio N-7180) (CTFV).